The primary structure comprises 336 residues: MAASLRLRGAASGLRYWSRRQPPAVASLAAVCSRSMASKTPVGFIGVGNMGNPMAKNLMKHGYPLIIYDVFPDACKEFLDAGEQVVSSPADVAEKADRIITMLPTSINAIEAYSGANGILKKVKKGSLLIDSSTIDPMVSKELAKEVEKMGAVFMDAPVSGGVGAARSGNLTFMVGGVEEEFAAAQELLGCMGSNVVYCGAVGTGQAAKICNNLLLAISMIGTAEAMNLGIRLGLDPKLLAKILNMSSGRCWSSDTYNPVPGVMDGVPSANNYQGGFGTTLMAKDLGLAQDSATSTKSPILLGSQAHQIYRMMCAKGYSKKDFSSVFQFLREEETF.

A mitochondrion-targeting transit peptide spans 1–36 (MAASLRLRGAASGLRYWSRRQPPAVASLAAVCSRSM). 40–69 (TPVGFIGVGNMGNPMAKNLMKHGYPLIIYD) contacts NAD(+). K60 and K76 each carry N6-acetyllysine; alternate. 2 positions are modified to N6-succinyllysine; alternate: K60 and K76. K95 carries the N6-succinyllysine modification. NAD(+) contacts are provided by residues 103 to 104 (LP) and N108. K121 is modified (N6-acetyllysine). T134 provides a ligand contact to NAD(+). Position 141 is an N6-succinyllysine (K141). At K145 the chain carries N6-acetyllysine. K149 carries the N6-acetyllysine; alternate modification. K149 bears the N6-succinyllysine; alternate mark. Residue K209 is part of the active site. 2 positions are modified to N6-acetyllysine; alternate: K238 and K242. K238 and K242 each carry N6-succinyllysine; alternate. K284 contacts NAD(+). An N6-succinyllysine modification is found at K297. Position 321 is an N6-acetyllysine; alternate (K321). K321 is subject to N6-succinyllysine; alternate.

The protein belongs to the HIBADH-related family. 3-hydroxyisobutyrate dehydrogenase subfamily. In terms of assembly, homodimer.

It is found in the mitochondrion. The catalysed reaction is 3-hydroxy-2-methylpropanoate + NAD(+) = 2-methyl-3-oxopropanoate + NADH + H(+). It participates in amino-acid degradation; L-valine degradation. This is 3-hydroxyisobutyrate dehydrogenase, mitochondrial (HIBADH) from Bos taurus (Bovine).